The primary structure comprises 732 residues: Protein kinase YpkA (732 aa).

The region spanning 136 to 408 is the Protein kinase domain; it reads VAETDKFAEG…SNEARLHEFL (273 aa). Residues 142–150 and Lys-163 contribute to the ATP site; that span reads FAEGESHIS. The active-site Proton acceptor is the Asp-270.

This sequence belongs to the protein kinase superfamily. Ser/Thr protein kinase family.

The protein localises to the secreted. The catalysed reaction is L-seryl-[protein] + ATP = O-phospho-L-seryl-[protein] + ADP + H(+). It catalyses the reaction L-threonyl-[protein] + ATP = O-phospho-L-threonyl-[protein] + ADP + H(+). In terms of biological role, acts as a virulence determinant. In Yersinia pseudotuberculosis serotype I (strain IP32953), this protein is Protein kinase YpkA (ypkA).